The chain runs to 296 residues: 4-hydroxybenzoate octaprenyltransferase (296 aa).

8 helical membrane-spanning segments follow: residues 28 to 48 (PIGI…AGNG), 52 to 72 (LANV…GCCI), 102 to 122 (ALTL…CTNS), 145 to 167 (TYYP…FTAA), 174 to 196 (GAWL…YAMV), 219 to 239 (SIIL…GSRF), 241 to 261 (LGGW…WEYW), and 275 to 295 (FLHN…DYAL).

Belongs to the UbiA prenyltransferase family. Mg(2+) serves as cofactor.

The protein resides in the cell inner membrane. It catalyses the reaction all-trans-octaprenyl diphosphate + 4-hydroxybenzoate = 4-hydroxy-3-(all-trans-octaprenyl)benzoate + diphosphate. The protein operates within cofactor biosynthesis; ubiquinone biosynthesis. Its function is as follows. Catalyzes the prenylation of para-hydroxybenzoate (PHB) with an all-trans polyprenyl group. Mediates the second step in the final reaction sequence of ubiquinone-8 (UQ-8) biosynthesis, which is the condensation of the polyisoprenoid side chain with PHB, generating the first membrane-bound Q intermediate 3-octaprenyl-4-hydroxybenzoate. This is 4-hydroxybenzoate octaprenyltransferase from Pseudomonas putida (strain ATCC 700007 / DSM 6899 / JCM 31910 / BCRC 17059 / LMG 24140 / F1).